A 424-amino-acid polypeptide reads, in one-letter code: Histidine--tRNA ligase (424 aa).

Belongs to the class-II aminoacyl-tRNA synthetase family. Homodimer.

It is found in the cytoplasm. The enzyme catalyses tRNA(His) + L-histidine + ATP = L-histidyl-tRNA(His) + AMP + diphosphate + H(+). The protein is Histidine--tRNA ligase of Thioalkalivibrio sulfidiphilus (strain HL-EbGR7).